The following is a 185-amino-acid chain: Guanylate kinase (185 aa).

In terms of domain architecture, Guanylate kinase-like spans 4–181 (GALYVVSGPS…ACNDLISIIE (178 aa)). 11 to 18 (GPSGAGKS) is a binding site for ATP.

Belongs to the guanylate kinase family.

The protein localises to the cytoplasm. It catalyses the reaction GMP + ATP = GDP + ADP. Functionally, essential for recycling GMP and indirectly, cGMP. This is Guanylate kinase from Fusobacterium nucleatum subsp. nucleatum (strain ATCC 25586 / DSM 15643 / BCRC 10681 / CIP 101130 / JCM 8532 / KCTC 2640 / LMG 13131 / VPI 4355).